The chain runs to 770 residues: POU domain, class 2, transcription factor 1 (770 aa).

Residues 1–26 (MNNPSETNKSSMESEDASTGTQTNGL) are compositionally biased toward polar residues. Disordered stretches follow at residues 1–33 (MNNP…KQPV), 68–97 (LNVQ…VQSA), 262–285 (VQTL…EPSD), and 357–385 (LSSD…RRKK). Over residues 80 to 97 (DSQQSSQPSSQPPSVQSA) the composition is skewed to low complexity. The span at 262–272 (VQTLPQSQSTP) shows a compositional bias: polar residues. Thr271 and Thr277 each carry phosphothreonine. One can recognise a POU-specific domain in the interval 281 to 355 (EEPSDLEELE…LLEKWLNDAE (75 aa)). At Ser284 the chain carries Phosphoserine. The segment covering 357 to 372 (LSSDSTASSPSALNSP) has biased composition (low complexity). Residues 382-441 (RRKKRTSIETNIRVALEKSFMENQKPTSEDITLIAEQLNMEKEVIRVWFCNRRQKEKRIN) constitute a DNA-binding region (homeobox). A phosphoserine mark is found at Ser388 and Ser451. Positions 519 to 580 (TTTAGTTDST…TNTTQTTSTP (62 aa)) are enriched in low complexity. The disordered stretch occupies residues 519 to 589 (TTTAGTTDST…PLPSPLGASQ (71 aa)).

This sequence belongs to the POU transcription factor family. Class-2 subfamily. In terms of assembly, interacts with POU2AF1; the interaction increases POU2F1 transactivation activity. Interacts with NR3C1, AR, PGR and HCFC1. Post-translationally, phosphorylated by PRKDC. In terms of tissue distribution, ubiquitously expressed. However, isoforms 4 and 5 are only expressed in lymphocytes.

It is found in the nucleus. In terms of biological role, transcription factor that binds to the octamer motif (5'-ATTTGCAT-3') and activates the promoters of the genes for some small nuclear RNAs (snRNA) and of genes such as those for histone H2B and immunoglobulins. Modulates transcription transactivation by NR3C1, AR and PGR. The sequence is that of POU domain, class 2, transcription factor 1 (Pou2f1) from Mus musculus (Mouse).